The primary structure comprises 99 residues: Ferredoxin (99 aa).

Residues Tyr4 to Gln96 enclose the 2Fe-2S ferredoxin-type domain. [2Fe-2S] cluster contacts are provided by Cys42, Cys47, Cys50, and Cys80.

Belongs to the 2Fe2S plant-type ferredoxin family. Forms a complex with heterodimeric ferredoxin-thioredoxin reductase (FTR) and thioredoxin. Requires [2Fe-2S] cluster as cofactor.

Its subcellular location is the plastid. The protein resides in the chloroplast. Ferredoxins are iron-sulfur proteins that transfer electrons in a wide variety of metabolic reactions. The sequence is that of Ferredoxin (petF) from Pyropia yezoensis (Susabi-nori).